We begin with the raw amino-acid sequence, 662 residues long: Phosphomethylpyrimidine synthase (662 aa).

Substrate contacts are provided by residues N235, M264, Y293, H329, 349–351 (SRG), 390–393 (DGMR), and E429. H433 serves as a coordination point for Zn(2+). Substrate is bound at residue Y456. Zn(2+) is bound at residue H497. 3 residues coordinate [4Fe-4S] cluster: C577, C580, and C585.

This sequence belongs to the ThiC family. As to quaternary structure, homodimer. Requires [4Fe-4S] cluster as cofactor.

It carries out the reaction 5-amino-1-(5-phospho-beta-D-ribosyl)imidazole + S-adenosyl-L-methionine = 4-amino-2-methyl-5-(phosphooxymethyl)pyrimidine + CO + 5'-deoxyadenosine + formate + L-methionine + 3 H(+). It functions in the pathway cofactor biosynthesis; thiamine diphosphate biosynthesis. Its function is as follows. Catalyzes the synthesis of the hydroxymethylpyrimidine phosphate (HMP-P) moiety of thiamine from aminoimidazole ribotide (AIR) in a radical S-adenosyl-L-methionine (SAM)-dependent reaction. The polypeptide is Phosphomethylpyrimidine synthase (Shewanella halifaxensis (strain HAW-EB4)).